The sequence spans 398 residues: Phosphoglycerate kinase (398 aa).

Residues 21–23, arginine 36, 59–62, arginine 119, and arginine 157 each bind substrate; these read DFN and HLGR. Residues lysine 208, glycine 296, glutamate 327, and 354–357 contribute to the ATP site; that span reads GGDS.

It belongs to the phosphoglycerate kinase family. As to quaternary structure, monomer.

Its subcellular location is the cytoplasm. The enzyme catalyses (2R)-3-phosphoglycerate + ATP = (2R)-3-phospho-glyceroyl phosphate + ADP. It participates in carbohydrate degradation; glycolysis; pyruvate from D-glyceraldehyde 3-phosphate: step 2/5. The protein is Phosphoglycerate kinase of Streptococcus pneumoniae serotype 4 (strain ATCC BAA-334 / TIGR4).